Consider the following 80-residue polypeptide: Small ribosomal subunit protein bS16c (80 aa).

This sequence belongs to the bacterial ribosomal protein bS16 family.

It is found in the plastid. It localises to the chloroplast. This chain is Small ribosomal subunit protein bS16c, found in Lotus japonicus (Lotus corniculatus var. japonicus).